A 205-amino-acid polypeptide reads, in one-letter code: Protein GrpE (205 aa).

The disordered stretch occupies residues 172–205; it reads KGSTGPGAPAEPAAAPNPYASNGADTGGSFDTKA. The segment covering 177–195 has biased composition (low complexity); sequence PGAPAEPAAAPNPYASNGA.

It belongs to the GrpE family. Homodimer.

The protein resides in the cytoplasm. Participates actively in the response to hyperosmotic and heat shock by preventing the aggregation of stress-denatured proteins, in association with DnaK and GrpE. It is the nucleotide exchange factor for DnaK and may function as a thermosensor. Unfolded proteins bind initially to DnaJ; upon interaction with the DnaJ-bound protein, DnaK hydrolyzes its bound ATP, resulting in the formation of a stable complex. GrpE releases ADP from DnaK; ATP binding to DnaK triggers the release of the substrate protein, thus completing the reaction cycle. Several rounds of ATP-dependent interactions between DnaJ, DnaK and GrpE are required for fully efficient folding. In Caulobacter sp. (strain K31), this protein is Protein GrpE.